The following is a 336-amino-acid chain: Potassium channel subfamily K member 1 (336 aa).

The Cytoplasmic portion of the chain corresponds to 1–20 (MLQSLAGSSCVRLVERHRSA). Residues 21 to 41 (RCFGFLVLGYLLYLVFGAVVF) traverse the membrane as a helical segment. The Extracellular portion of the chain corresponds to 42 to 103 (SSVELPYEDL…SNASGNWNWD (62 aa)). N-linked (GlcNAc...) asparagine glycosylation occurs at Asn-95. An intramembrane region (helical) is located at residues 104-116 (FTSALFFASTVLS). The stretch at 117-122 (TTGYGH) is an intramembrane region. Positions 117-122 (TTGYGH) are selectivity filter 1. Residues 123 to 132 (TVPLSDGGKA) lie on the Extracellular side of the membrane. A helical membrane pass occupies residues 133–156 (FCIIYSVIGIPFTLLFLTAVVQRI). Topologically, residues 157-181 (TVHVTRRPVLYFHIRWGFSKQVVAI) are cytoplasmic. The chain crosses the membrane as a helical span at residues 182 to 202 (VHAVLLGFVTVSCFFFIPAAV). Topologically, residues 203–211 (FSVLEDDWN) are extracellular. The helical intramembrane region spans 212–224 (FLESFYFCFISLS). The tract at residues 225–230 (TIGLGD) is selectivity filter 2. An intramembrane segment occupies 225 to 231 (TIGLGDY). The Extracellular portion of the chain corresponds to 232 to 243 (VPGEGYNQKFRE). Residues 244–267 (LYKIGITCYLLLGLIAMLVVLETF) traverse the membrane as a helical segment. At 268-336 (CELHELKKFR…SACMDGPANH (69 aa)) the chain is on the cytoplasmic side. Lys-274 is covalently cross-linked (Glycyl lysine isopeptide (Lys-Gly) (interchain with G-Cter in SUMO)). The segment at 293–299 (IIEHDQL) is important for intracellular retention in recycling endosomes. Positions 315 to 336 (QKQNEPFVATQSSACMDGPANH) are disordered. The residue at position 326 (Ser-326) is a Phosphoserine.

It belongs to the two pore domain potassium channel (TC 1.A.1.8) family. As to quaternary structure, homodimer; disulfide-linked. Heterodimer with KCNK2; disulfide-linked. In astrocytes, forms mostly heterodimeric potassium channels with KCNK2, with only a minor proportion of functional channels containing homodimeric KCNK1. Interacts with KCNK3 and KCNK9, forming functional heterodimeric channels. Interacts with GNG4. Identified in a complex with PSD and ARF6; interacts only with PSD that is bound to ARF6. Interacts with UBE2I. Sumoylation is controversial. Sumoylated by UBE2I. Not sumoylated when expressed in xenopus oocytes or mammalian cells. Sumoylation inactivates the channel, but does not interfere with expression at the cell membrane. Sumoylation of a single subunit is sufficient to silence the dimeric channel. Sumoylation of KCNK1 is sufficient to silence heterodimeric channels formed by KCNK1 and KCNK3 or KCNK9. Desumoylated by SENP1; this activates the channel. Desumoylated by SENP1; this strongly increases halothane-mediated activation of heterodimeric channels formed with KCNK9. SENP1 treatment has no effect.

It localises to the cell membrane. The protein localises to the recycling endosome. Its subcellular location is the synaptic cell membrane. It is found in the cytoplasmic vesicle. The protein resides in the perikaryon. It localises to the cell projection. The protein localises to the dendrite. Its subcellular location is the apical cell membrane. It catalyses the reaction K(+)(in) = K(+)(out). The enzyme catalyses NH4(+)(in) = NH4(+)(out). It carries out the reaction Na(+)(in) = Na(+)(out). The catalysed reaction is Rb(+)(in) = Rb(+)(out). It catalyses the reaction Cs(+)(in) = Cs(+)(out). The enzyme catalyses Li(+)(in) = Li(+)(out). It carries out the reaction L-glutamate(out) = L-glutamate(in). The catalysed reaction is chloride(in) = chloride(out). In terms of biological role, ion channel that contributes to passive transmembrane potassium transport and to the regulation of the resting membrane potential in brain astrocytes, but also in kidney and in other tissues. Forms dimeric channels through which potassium ions pass in accordance with their electrochemical gradient. The channel is selective for K(+) ions at physiological potassium concentrations and at neutral pH, but becomes permeable to Na(+) at subphysiological K(+) levels, and upon acidification of the extracellular medium. The homodimer has very low potassium channel activity, when expressed in heterologous systems, and can function as weakly inward rectifying potassium channel. Channel activity is modulated by activation of serotonin receptors. Heterodimeric channels containing KCNK1 and KCNK2 have much higher activity, and may represent the predominant form in astrocytes. Heterodimeric channels containing KCNK1 and KCNK3 or KCNK9 have much higher activity. Heterodimeric channels formed by KCNK1 and KCNK9 may contribute to halothane-sensitive currents. Mediates outward rectifying potassium currents in dentate gyrus granule cells and contributes to the regulation of their resting membrane potential. Contributes to the regulation of action potential firing in dentate gyrus granule cells and down-regulates their intrinsic excitability. In astrocytes, the heterodimer formed by KCNK1 and KCNK2 is required for rapid glutamate release in response to activation of G-protein coupled receptors, such as F2R and CNR1. Required for normal ion and water transport in the kidney. Contributes to the regulation of the resting membrane potential of pancreatic beta cells. The low channel activity of homodimeric KCNK1 may be due to sumoylation. The low channel activity may be due to rapid internalization from the cell membrane and retention in recycling endosomes. Permeable to monovalent cations with ion selectivity for K(+) &gt; Rb(+) &gt;&gt; NH4(+) &gt;&gt; Cs(+) = Na(+) = Li(+). The chain is Potassium channel subfamily K member 1 from Pongo abelii (Sumatran orangutan).